Consider the following 214-residue polypeptide: Adenylate kinase (214 aa).

Residue 10 to 15 coordinates ATP; that stretch reads GAGKGT. Residues 30-59 form an NMP region; that stretch reads STGDMLRAAIKAGTELGKQAKAVIDAGQLV. AMP-binding positions include T31, R36, 57-59, 85-88, and Q92; these read QLV and GFPR. The segment at 122–159 is LID; that stretch reads GRRAHLPSGRTYHVVYNPPKVEGKDDVTGEDLVVRDDD. Residues R123 and 132–133 each bind ATP; that span reads TY. Positions 156 and 167 each coordinate AMP. ATP is bound at residue K200.

This sequence belongs to the adenylate kinase family. As to quaternary structure, monomer.

It is found in the cytoplasm. It carries out the reaction AMP + ATP = 2 ADP. It participates in purine metabolism; AMP biosynthesis via salvage pathway; AMP from ADP: step 1/1. Its function is as follows. Catalyzes the reversible transfer of the terminal phosphate group between ATP and AMP. Plays an important role in cellular energy homeostasis and in adenine nucleotide metabolism. The protein is Adenylate kinase of Vibrio campbellii (strain ATCC BAA-1116).